The following is a 310-amino-acid chain: Beta-ketoacyl-[acyl-carrier-protein] synthase III 1 (310 aa).

Catalysis depends on residues cysteine 112 and histidine 235. The interval 236-240 is ACP-binding; the sequence is QANIR. The active site involves asparagine 265.

This sequence belongs to the thiolase-like superfamily. FabH family. In terms of assembly, homodimer.

Its subcellular location is the cytoplasm. The enzyme catalyses malonyl-[ACP] + acetyl-CoA + H(+) = 3-oxobutanoyl-[ACP] + CO2 + CoA. It participates in lipid metabolism; fatty acid biosynthesis. Catalyzes the condensation reaction of fatty acid synthesis by the addition to an acyl acceptor of two carbons from malonyl-ACP. Catalyzes the first condensation reaction which initiates fatty acid synthesis and may therefore play a role in governing the total rate of fatty acid production. Possesses both acetoacetyl-ACP synthase and acetyl transacylase activities. Its substrate specificity determines the biosynthesis of branched-chain and/or straight-chain of fatty acids. The sequence is that of Beta-ketoacyl-[acyl-carrier-protein] synthase III 1 from Bacillus cereus (strain ATCC 14579 / DSM 31 / CCUG 7414 / JCM 2152 / NBRC 15305 / NCIMB 9373 / NCTC 2599 / NRRL B-3711).